The chain runs to 307 residues: GTPase Era (307 aa).

The 168-residue stretch at 13–180 (RCGFVALIGA…RRALAEMVPP (168 aa)) folds into the Era-type G domain. Residues 21 to 28 (GAPNVGKS) are G1. 21–28 (GAPNVGKS) lines the GTP pocket. The tract at residues 47-51 (QTTRA) is G2. The G3 stretch occupies residues 68–71 (DTPG). Residues 68–72 (DTPGI) and 130–133 (NKVD) each bind GTP. Residues 130-133 (NKVD) form a G4 region. The G5 stretch occupies residues 159-161 (ISA). The region spanning 211-288 (LHQELPYQST…HLFLFVKVRE (78 aa)) is the KH type-2 domain.

The protein belongs to the TRAFAC class TrmE-Era-EngA-EngB-Septin-like GTPase superfamily. Era GTPase family. In terms of assembly, monomer.

It is found in the cytoplasm. Its subcellular location is the cell inner membrane. Its function is as follows. An essential GTPase that binds both GDP and GTP, with rapid nucleotide exchange. Plays a role in 16S rRNA processing and 30S ribosomal subunit biogenesis and possibly also in cell cycle regulation and energy metabolism. The polypeptide is GTPase Era (Bradyrhizobium sp. (strain ORS 278)).